We begin with the raw amino-acid sequence, 186 residues long: UPF0200 protein Mbar_A0975 (186 aa).

Position 8-15 (8-15 (GMPASGKS)) interacts with ATP.

The protein belongs to the UPF0200 family.

This chain is UPF0200 protein Mbar_A0975, found in Methanosarcina barkeri (strain Fusaro / DSM 804).